The primary structure comprises 56 residues: Ovomucoid (56 aa).

In terms of domain architecture, Kazal-like spans 6–56 (VDCSEYPKPACTLEHRPLCGSDNKTYGNKCNFCNAVVESNGTLTLSHFGKC). 3 disulfide bridges follow: Cys-8/Cys-38, Cys-16/Cys-35, and Cys-24/Cys-56. N-linked (GlcNAc...) asparagine glycosylation occurs at Asn-45.

The protein localises to the secreted. This Pavo cristatus (Indian peafowl) protein is Ovomucoid.